Here is a 260-residue protein sequence, read N- to C-terminus: tRNA pseudouridine synthase C (260 aa).

D54 is a catalytic residue.

The protein belongs to the pseudouridine synthase RluA family.

It catalyses the reaction uridine(65) in tRNA = pseudouridine(65) in tRNA. Its function is as follows. Responsible for synthesis of pseudouridine from uracil-65 in transfer RNAs. This chain is tRNA pseudouridine synthase C (truC), found in Escherichia coli (strain K12).